The primary structure comprises 101 residues: Small ribosomal subunit protein bS18c (101 aa).

The protein belongs to the bacterial ribosomal protein bS18 family. In terms of assembly, part of the 30S ribosomal subunit.

Its subcellular location is the plastid. It localises to the chloroplast. The sequence is that of Small ribosomal subunit protein bS18c from Lactuca sativa (Garden lettuce).